A 193-amino-acid chain; its full sequence is Zinc finger CCHC domain-containing protein 17 (193 aa).

The 40-residue stretch at 1–40 (MSSCRVDKPSEIVDVGDKVWVKLIGREMKNDRIKVSLSMK) folds into the S1 motif; truncated domain. The residue at position 66 (S66) is a Phosphoserine. The CCHC-type zinc-finger motif lies at 83-100 (TTCKKCGCKGHFAKDCFM). Residue K96 is modified to N6-acetyllysine. Residues 113 to 193 (EEEEKEEAKS…KKKHKKKHKE (81 aa)) are disordered. Over residues 118–129 (EEAKSAEFEKPV) the composition is skewed to basic and acidic residues. Positions 134 to 150 (PSRKRKKEKKKKKHRDR) are enriched in basic residues. Residue S135 is modified to Phosphoserine. Over residues 163–177 (DTGKRARHTSKDSKA) the composition is skewed to basic and acidic residues. The segment covering 178–193 (AKKKKKKKKHKKKHKE) has biased composition (basic residues).

As to quaternary structure, may interact with PNN. May associate with the 60 S ribosomal subunit.

The protein localises to the nucleus. It localises to the nucleolus. This is Zinc finger CCHC domain-containing protein 17 (ZCCHC17) from Macaca fascicularis (Crab-eating macaque).